The sequence spans 144 residues: Androgenic gland hormone (144 aa).

Positions methionine 1 to alanine 21 are cleaved as a signal peptide. 4 disulfide bridges follow: cysteine 33–cysteine 123, cysteine 42–cysteine 59, cysteine 44–cysteine 141, and cysteine 124–cysteine 132. A propeptide spans serine 68–glycine 113 (c peptide). Asparagine 133 carries an N-linked (GlcNAc...) (complex) asparagine glycan.

Androgenic gland.

It is found in the secreted. Functionally, controls sex differentiation and the formation of male appendages, spermatogenesis, pigmentation, and male specific behavior. The sequence is that of Androgenic gland hormone from Armadillidium vulgare (Pillbug).